A 365-amino-acid polypeptide reads, in one-letter code: Putative fatty acid elongase 2 (365 aa).

Residues 1-68 (MPDSPTLHHN…SFEFIVNKTR (68 aa)) are Lumenal-facing. 2 N-linked (GlcNAc...) asparagine glycosylation sites follow: Asn17 and Asn65. Residues 69 to 89 (FSSAPVVATIIISYYLLILVG) traverse the membrane as a helical segment. The Cytoplasmic portion of the chain corresponds to 90–111 (GRIMRNRQPIRLQKIFQYYNLT). The helical transmembrane segment at 112-132 (FSIASAILALLIFEQVAPAIY) threads the bilayer. Residues 133–149 (KHGFFFSICNEKAWTQP) are Lumenal-facing. A helical membrane pass occupies residues 150 to 170 (LVFLYYCAYISKFLELTDTFF). Topologically, residues 171-179 (LVLRKKPLQ) are cytoplasmic. A helical transmembrane segment spans residues 180 to 198 (FLHCYHHGATAVLVYTQIV). Residues 199 to 204 (GRTSIS) lie on the Lumenal side of the membrane. The chain crosses the membrane as a helical span at residues 205–225 (WLIIEINLLVHVTMYYYYYLV). Residues 226–241 (AKGIRVPWKKWVTRFQ) are Cytoplasmic-facing. Residues 242–262 (IVQFFADLGFIYFAVYTEVAY) form a helical membrane-spanning segment. Residues 263–278 (RLKFYKACMGHCSGHP) are Lumenal-facing. A helical transmembrane segment spans residues 279–299 (LAAFCGLATISSYLVLFIVFY). At 300–365 (HNTYKKNAAL…PISSGLNNEK (66 aa)) the chain is on the cytoplasmic side.

The protein belongs to the ELO family.

It is found in the endoplasmic reticulum membrane. The enzyme catalyses a very-long-chain acyl-CoA + malonyl-CoA + H(+) = a very-long-chain 3-oxoacyl-CoA + CO2 + CoA. Functionally, may be involved in the synthesis of very long chain fatty acids. This is Putative fatty acid elongase 2 from Schizosaccharomyces pombe (strain 972 / ATCC 24843) (Fission yeast).